Reading from the N-terminus, the 353-residue chain is Photosystem II D2 protein (353 aa).

N-acetylthreonine is present on Thr-2. Phosphothreonine is present on Thr-2. A helical transmembrane segment spans residues 41 to 61 (CAYFALGGWFTGTTFVTSWYT). His-118 contacts chlorophyll a. Residues 125–141 (GFMLRQFELARSVQLRP) traverse the membrane as a helical segment. Gln-130 and Asn-143 together coordinate pheophytin a. The helical transmembrane segment at 153-166 (VFVSVFLIYPLGQS) threads the bilayer. A chlorophyll a-binding site is contributed by His-198. Residues 208–228 (AALLCAIHGATVENTLFEDGD) traverse the membrane as a helical segment. The a plastoquinone site is built by His-215 and Phe-262. His-215 serves as a coordination point for Fe cation. His-269 is a binding site for Fe cation. Residues 279-295 (GLWMSAIGVVGLALNLR) traverse the membrane as a helical segment.

It belongs to the reaction center PufL/M/PsbA/D family. As to quaternary structure, PSII is composed of 1 copy each of membrane proteins PsbA, PsbB, PsbC, PsbD, PsbE, PsbF, PsbH, PsbI, PsbJ, PsbK, PsbL, PsbM, PsbT, PsbX, PsbY, PsbZ, Psb30/Ycf12, at least 3 peripheral proteins of the oxygen-evolving complex and a large number of cofactors. It forms dimeric complexes. Requires The D1/D2 heterodimer binds P680, chlorophylls that are the primary electron donor of PSII, and subsequent electron acceptors. It shares a non-heme iron and each subunit binds pheophytin, quinone, additional chlorophylls, carotenoids and lipids. There is also a Cl(-1) ion associated with D1 and D2, which is required for oxygen evolution. The PSII complex binds additional chlorophylls, carotenoids and specific lipids. as cofactor.

The protein localises to the plastid. Its subcellular location is the chloroplast thylakoid membrane. It carries out the reaction 2 a plastoquinone + 4 hnu + 2 H2O = 2 a plastoquinol + O2. Functionally, photosystem II (PSII) is a light-driven water:plastoquinone oxidoreductase that uses light energy to abstract electrons from H(2)O, generating O(2) and a proton gradient subsequently used for ATP formation. It consists of a core antenna complex that captures photons, and an electron transfer chain that converts photonic excitation into a charge separation. The D1/D2 (PsbA/PsbD) reaction center heterodimer binds P680, the primary electron donor of PSII as well as several subsequent electron acceptors. D2 is needed for assembly of a stable PSII complex. This chain is Photosystem II D2 protein, found in Oryza nivara (Indian wild rice).